Consider the following 483-residue polypeptide: MNTLNRRDFPGALYPERIIQFGEGNFLRAFIDWQIDLLNEHTDLNSGVVIVRPIKSDFPPSLSVQDGLYTTIIRGLNEQGEAVSDARLIRSVNREISVYSQYDEFLKLAHNPDMRFVFSNTTEAGISYHAEDKFDDAPAVSYPAKLTRLLFERFSHFNGAADKGWVIIPCELIDYNGDALRELVLRYAQEWALPAEFTQWLNDANAFCSTLVDRIVTGYPRDEVTALETELGYHDGFLDTAEHFYLFVIQGPKSLASELRLDKLSLNVLIVDDIKPYKERKVAILNGAHTALVPVAFQAGLDTVGEAMNDAEVCAFVEKAIYQEIIPVLDLPKDELESFASAVTGRFRNPYIKHQLLSIALNGMTKYRTRILPQLLAGQKATGKLPARLTFALAALIAFYRGERNGESYPVQDDQHWLDRYQQLWAQHHDKQISTSELVKAVLSVSEHWEQDLTNVSGLVEQVTLDLDAILLQGMRAAVKQLC.

NAD(+) is bound at residue 18–29 (IIQFGEGNFLRA).

The protein belongs to the mannitol dehydrogenase family. UxaB subfamily.

It carries out the reaction D-altronate + NAD(+) = keto-D-tagaturonate + NADH + H(+). It participates in carbohydrate metabolism; pentose and glucuronate interconversion. The sequence is that of Altronate oxidoreductase from Enterobacter sp. (strain 638).